A 128-amino-acid chain; its full sequence is Large ribosomal subunit protein bL20c (128 aa).

It belongs to the bacterial ribosomal protein bL20 family.

Its subcellular location is the plastid. It localises to the chloroplast. Binds directly to 23S ribosomal RNA and is necessary for the in vitro assembly process of the 50S ribosomal subunit. It is not involved in the protein synthesizing functions of that subunit. The polypeptide is Large ribosomal subunit protein bL20c (Daucus carota (Wild carrot)).